The chain runs to 347 residues: NADH-ubiquinone oxidoreductase chain 2 (347 aa).

11 consecutive transmembrane segments (helical) span residues 1–21, 25–45, 59–79, 96–116, 127–147, 149–169, 178–198, 200–220, 247–267, 276–296, and 325–345; these read MNPL…AIVM, HWLT…PMLM, YFLT…MNLT, IIMT…FWVP, CLIL…MISP, INLN…GWGG, IMAY…AYNP, MTML…MLLI, IMLS…WMII, IIMP…YMRL, and LLSP…MMSL.

The protein belongs to the complex I subunit 2 family. As to quaternary structure, core subunit of respiratory chain NADH dehydrogenase (Complex I) which is composed of 45 different subunits. Interacts with TMEM242.

The protein localises to the mitochondrion inner membrane. The enzyme catalyses a ubiquinone + NADH + 5 H(+)(in) = a ubiquinol + NAD(+) + 4 H(+)(out). Its function is as follows. Core subunit of the mitochondrial membrane respiratory chain NADH dehydrogenase (Complex I) which catalyzes electron transfer from NADH through the respiratory chain, using ubiquinone as an electron acceptor. Essential for the catalytic activity and assembly of complex I. The sequence is that of NADH-ubiquinone oxidoreductase chain 2 from Natalus stramineus (Mexican funnel-eared bat).